The sequence spans 231 residues: Small ribosomal subunit protein uS3 (231 aa).

Positions 39–107 (IRKFIMKTLP…GVSLNIVEIR (69 aa)) constitute a KH type-2 domain.

It belongs to the universal ribosomal protein uS3 family. In terms of assembly, part of the 30S ribosomal subunit. Forms a tight complex with proteins S10 and S14.

In terms of biological role, binds the lower part of the 30S subunit head. Binds mRNA in the 70S ribosome, positioning it for translation. This is Small ribosomal subunit protein uS3 from Zymomonas mobilis subsp. mobilis (strain ATCC 31821 / ZM4 / CP4).